Reading from the N-terminus, the 753-residue chain is Signal transducer and activator of transcription 1 (753 aa).

S2 is modified (N-acetylserine). N6-methyllysine occurs at positions 114, 175, 296, 366, 525, and 637. Positions L136–F317 form a coiled coil. An SH2 domain is found at W573–N670. Position 657 is an ADP-ribosyl glutamic acid (E657). N6-methyllysine is present on K665. Y701 bears the Phosphotyrosine; by JAK1, JAK2 or TYK2 mark. K703 is covalently cross-linked (Glycyl lysine isopeptide (Lys-Gly) (interchain with G-Cter in SUMO1); alternate). A Glycyl lysine isopeptide (Lys-Gly) (interchain with G-Cter in SUMO2); alternate cross-link involves residue K703. Position 705 is an ADP-ribosyl glutamic acid (E705). At S708 the chain carries Phosphoserine; by IKKE. Phosphoserine; by MAPK14 is present on S727. T749 carries the phosphothreonine modification.

Belongs to the transcription factor STAT family. As to quaternary structure, homodimerizes upon IFN-gamma induced phosphorylation. Heterodimer with STAT2 upon IFN-alpha/beta induced phosphorylation. The heterodimer STAT1:STAT2 forms the interferon-stimulated gene factor 3 complex (ISGF3) with IRF9. Interacts (phosphorylated at Ser-727) with PIAS1; the interaction results in release of STAT1 from its target gene. Interacts with IFNAR1. Interacts with IFNAR2. Found in a complex with NMI and CREBBP/CBP. Interacts with NMI which is required for CREBBP/CBP recruitment to the complex. Interacts with PTK2/FAK1. Interacts with SRC. Interacts with ERBB4 (phosphorylated). Interacts with PARP9 and DTX3L independently of IFN-beta or IFN-gamma-mediated STAT1 'Tyr-701' phosphorylation. Interacts with histone acetyltransferase EP300/p300 in response to INF-gamma stimulation. Independently of its phosphorylation status, interacts with OTOP1. Interacts with IFNGR1. Interacts with STAT4. (Microbial infection) Interacts with African swine fever virus (ASFV) MGF360-9L; this interaction mediates degradation of STAT1 through apoptosis. Phosphorylated on tyrosine and serine residues in response to a variety of cytokines/growth hormones including IFN-alpha, IFN-gamma, PDGF and EGF. Activated KIT promotes phosphorylation on tyrosine residues and subsequent translocation to the nucleus. Upon EGF stimulation, phosphorylation on Tyr-701 (lacking in beta form) by JAK1, JAK2 or TYK2 promotes dimerization and subsequent translocation to the nucleus. Growth hormone (GH) activates STAT1 signaling only via JAK2. Tyrosine phosphorylated in response to constitutively activated FGFR1, FGFR2, FGFR3 and FGFR4. Phosphorylation on Ser-727 by several kinases including MAPK14, ERK1/2 and CAMK2/CAMKII in response to IFN-gamma stimulation, is required for maximal transcriptional activity. Phosphorylated on Ser-727 by CAMK2/CAMKII in response to IFN-gamma stimulation and calcium mobilization, promoting activity. Phosphorylated by CAMK2/CAMKII in response to IFN-beta stimulation and calcium mobilization in epithelial cells, promoting activity. Phosphorylation on Ser-727 promotes sumoylation though increasing interaction with PIAS. Phosphorylation on Ser-727 by PRKCD induces apoptosis in response to DNA-damaging agents. Phosphorylated on tyrosine residues when PTK2/FAK1 is activated; most likely this is catalyzed by a SRC family kinase. Dephosphorylation on tyrosine residues by PTPN2 negatively regulates interferon-mediated signaling. Upon viral infection or IFN induction, phosphorylation on Ser-708 occurs much later than phosphorylation on Tyr-701 and is required for the binding of ISGF3 on the ISREs of a subset of IFN-stimulated genes IKBKE-dependent. Phosphorylation at Tyr-701 and Ser-708 are mutually exclusive, phosphorylation at Ser-708 requires previous dephosphorylation of Tyr-701. Phosphorylation at Thr-749 by IKBKB/IKKB promotes transcriptional activation of ARID5A and IL12B by STAT1. Phosphorylation at Thr-749 restricts interferon signaling and anti-inflammatory responses and promotes innate inflammatory responses. In terms of processing, sumoylated with SUMO1, SUMO2 and SUMO3. Sumoylation is enhanced by IFN-gamma-induced phosphorylation on Ser-727, and by interaction with PIAS proteins. Enhances the transactivation activity. Post-translationally, ISGylated. Mono-ADP-ribosylated at Glu-657 and Glu-705 by PARP14; ADP-ribosylation prevents phosphorylation at Tyr-701. However, the role of ADP-ribosylation in the prevention of phosphorylation has been called into question and the lack of phosphorylation may be due to sumoylation of Lys-703. In terms of processing, monomethylated at Lys-525 by SETD2; monomethylation is necessary for phosphorylation at Tyr-701, translocation into the nucleus and activation of the antiviral defense. Post-translationally, deubiquitinated by USP13; leading to STAT1 stabilization and positive regulation of type I and type II IFN signalings.

The protein resides in the cytoplasm. It is found in the nucleus. Functionally, signal transducer and transcription activator that mediates cellular responses to interferons (IFNs), cytokine KITLG/SCF and other cytokines and other growth factors. Following type I IFN (IFN-alpha and IFN-beta) binding to cell surface receptors, signaling via protein kinases leads to activation of Jak kinases (TYK2 and JAK1) and to tyrosine phosphorylation of STAT1 and STAT2. The phosphorylated STATs dimerize and associate with ISGF3G/IRF-9 to form a complex termed ISGF3 transcription factor, that enters the nucleus. ISGF3 binds to the IFN stimulated response element (ISRE) to activate the transcription of IFN-stimulated genes (ISG), which drive the cell in an antiviral state. In response to type II IFN (IFN-gamma), STAT1 is tyrosine- and serine-phosphorylated. It then forms a homodimer termed IFN-gamma-activated factor (GAF), migrates into the nucleus and binds to the IFN gamma activated sequence (GAS) to drive the expression of the target genes, inducing a cellular antiviral state. Becomes activated in response to KITLG/SCF and KIT signaling. May mediate cellular responses to activated FGFR1, FGFR2, FGFR3 and FGFR4. Following bacterial lipopolysaccharide (LPS)-induced TLR4 endocytosis, phosphorylated at Thr-749 by IKBKB which promotes binding of STAT1 to the 5'-TTTGAGGC-3' sequence in the ARID5A promoter, resulting in transcriptional activation of ARID5A and subsequent ARID5A-mediated stabilization of IL6. Phosphorylation at Thr-749 also promotes binding of STAT1 to the 5'-TTTGAGTC-3' sequence in the IL12B promoter and activation of IL12B transcription. Involved in food tolerance in small intestine: associates with the Gasdermin-D, p13 cleavage product (13 kDa GSDMD) and promotes transcription of CIITA, inducing type 1 regulatory T (Tr1) cells in upper small intestine. The protein is Signal transducer and activator of transcription 1 (STAT1) of Sus scrofa (Pig).